Consider the following 425-residue polypeptide: 5-hydroxytryptamine receptor 7 (425 aa).

Over 1–72 (MLIQVQPSHL…LLYGDTEKIV (72 aa)) the chain is Extracellular. N-linked (GlcNAc...) asparagine glycosylation is found at asparagine 14, asparagine 41, and asparagine 51. A helical membrane pass occupies residues 73-97 (IGVVLSIITLFTIAGNALVIISVCI). The Cytoplasmic segment spans residues 98 to 107 (VKKLRQPSNY). A helical transmembrane segment spans residues 108–129 (LVVSLAAADLSVAVAVMPFVII). Residues 130-141 (TDLVGGEWLFGK) lie on the Extracellular side of the membrane. The chain crosses the membrane as a helical span at residues 142–167 (VFCNVFIAMDVMCCTASIMTLCVISV). Cysteine 144 and cysteine 220 are oxidised to a cystine. Aspartate 151 lines the serotonin pocket. The Cytoplasmic portion of the chain corresponds to 168 to 187 (DRYLGITRPLTYPARQNGKL). Residues 188–208 (MAKMVFIVWLLSASITLPPLF) traverse the membrane as a helical segment. Over 209–226 (GWAKNVNVERVCLISQDF) the chain is Extracellular. Residues 227–249 (GYTVYSTAVAFYIPMTVMLVMYQ) form a helical membrane-spanning segment. The Cytoplasmic portion of the chain corresponds to 250 to 322 (RIFVAAKISA…SIFKREQKAA (73 aa)). Residues 323–348 (RTLGIIVGAFTFCWLPFFLLSTARPF) form a helical membrane-spanning segment. Over 349–359 (ICGIMCSCMPL) the chain is Extracellular. Residues 360–383 (RLERTLLWLGYTNSLINPLIYAFF) traverse the membrane as a helical segment. The Cytoplasmic segment spans residues 384–425 (NRDLRTTFWNLLRCKYTNINRRLSAASMHEALKVTERHEGIL). A lipid anchor (S-palmitoyl cysteine) is attached at cysteine 397.

It belongs to the G-protein coupled receptor 1 family.

It localises to the cell membrane. G-protein coupled receptor for 5-hydroxytryptamine (serotonin), a biogenic hormone that functions as a neurotransmitter, a hormone and a mitogen. Ligand binding causes a conformation change that triggers signaling via guanine nucleotide-binding proteins (G proteins) and modulates the activity of downstream effectors. HTR7 is coupled to G(s) G alpha proteins and mediates activation of adenylate cyclase activity. This chain is 5-hydroxytryptamine receptor 7 (htr7), found in Xenopus laevis (African clawed frog).